Reading from the N-terminus, the 443-residue chain is ATP-dependent protease ATPase subunit HslU (443 aa).

ATP is bound by residues Ile-18, 60 to 65, Asp-256, Glu-321, and Arg-393; that span reads GVGKTE.

This sequence belongs to the ClpX chaperone family. HslU subfamily. In terms of assembly, a double ring-shaped homohexamer of HslV is capped on each side by a ring-shaped HslU homohexamer. The assembly of the HslU/HslV complex is dependent on binding of ATP.

Its subcellular location is the cytoplasm. In terms of biological role, ATPase subunit of a proteasome-like degradation complex; this subunit has chaperone activity. The binding of ATP and its subsequent hydrolysis by HslU are essential for unfolding of protein substrates subsequently hydrolyzed by HslV. HslU recognizes the N-terminal part of its protein substrates and unfolds these before they are guided to HslV for hydrolysis. This is ATP-dependent protease ATPase subunit HslU from Buchnera aphidicola subsp. Acyrthosiphon pisum (strain 5A).